A 368-amino-acid chain; its full sequence is tRNA-cytidine(32) 2-sulfurtransferase (368 aa).

Positions 95-100 match the PP-loop motif motif; sequence SGGKDS. [4Fe-4S] cluster is bound by residues cysteine 170, cysteine 173, and cysteine 261.

Belongs to the TtcA family. In terms of assembly, homodimer. It depends on Mg(2+) as a cofactor. The cofactor is [4Fe-4S] cluster.

The protein resides in the cytoplasm. The catalysed reaction is cytidine(32) in tRNA + S-sulfanyl-L-cysteinyl-[cysteine desulfurase] + AH2 + ATP = 2-thiocytidine(32) in tRNA + L-cysteinyl-[cysteine desulfurase] + A + AMP + diphosphate + H(+). Its pathway is tRNA modification. In terms of biological role, catalyzes the ATP-dependent 2-thiolation of cytidine in position 32 of tRNA, to form 2-thiocytidine (s(2)C32). The sulfur atoms are provided by the cysteine/cysteine desulfurase (IscS) system. The protein is tRNA-cytidine(32) 2-sulfurtransferase of Psychrobacter sp. (strain PRwf-1).